A 908-amino-acid chain; its full sequence is DNA mismatch repair protein MutS (908 aa).

659–666 (GPNMAGKS) lines the ATP pocket.

It belongs to the DNA mismatch repair MutS family.

In terms of biological role, this protein is involved in the repair of mismatches in DNA. It is possible that it carries out the mismatch recognition step. This protein has a weak ATPase activity. The protein is DNA mismatch repair protein MutS of Parvibaculum lavamentivorans (strain DS-1 / DSM 13023 / NCIMB 13966).